Consider the following 381-residue polypeptide: L-lactate dehydrogenase (381 aa).

Positions methionine 1–lysine 380 constitute an FMN hydroxy acid dehydrogenase domain. Tyrosine 24 lines the substrate pocket. 2 residues coordinate FMN: serine 106 and glutamine 127. Residue tyrosine 129 coordinates substrate. Threonine 155 provides a ligand contact to FMN. Arginine 164 serves as a coordination point for substrate. Lysine 251 provides a ligand contact to FMN. Catalysis depends on histidine 275, which acts as the Proton acceptor. Arginine 278 serves as a coordination point for substrate. An FMN-binding site is contributed by aspartate 306 to arginine 330.

The protein belongs to the FMN-dependent alpha-hydroxy acid dehydrogenase family. The cofactor is FMN.

It localises to the cell inner membrane. It catalyses the reaction (S)-lactate + A = pyruvate + AH2. Its function is as follows. Catalyzes the conversion of L-lactate to pyruvate. Is coupled to the respiratory chain. This Haemophilus influenzae (strain 86-028NP) protein is L-lactate dehydrogenase.